Here is a 482-residue protein sequence, read N- to C-terminus: Ribulose bisphosphate carboxylase large chain (482 aa).

The propeptide occupies 1-2 (MS). Position 3 is an N-acetylproline (proline 3). Lysine 14 is subject to N6,N6,N6-trimethyllysine. Residues asparagine 123 and threonine 173 each coordinate substrate. The active-site Proton acceptor is lysine 175. Lysine 177 lines the substrate pocket. The Mg(2+) site is built by lysine 201, aspartate 203, and glutamate 204. Position 201 is an N6-carboxylysine (lysine 201). The active-site Proton acceptor is the histidine 294. Substrate-binding residues include arginine 295, histidine 327, and serine 379.

It belongs to the RuBisCO large chain family. Type I subfamily. Heterohexadecamer of 8 large chains and 8 small chains; disulfide-linked. The disulfide link is formed within the large subunit homodimers. Mg(2+) serves as cofactor. The disulfide bond which can form in the large chain dimeric partners within the hexadecamer appears to be associated with oxidative stress and protein turnover.

It localises to the plastid. Its subcellular location is the chloroplast. The catalysed reaction is 2 (2R)-3-phosphoglycerate + 2 H(+) = D-ribulose 1,5-bisphosphate + CO2 + H2O. It catalyses the reaction D-ribulose 1,5-bisphosphate + O2 = 2-phosphoglycolate + (2R)-3-phosphoglycerate + 2 H(+). RuBisCO catalyzes two reactions: the carboxylation of D-ribulose 1,5-bisphosphate, the primary event in carbon dioxide fixation, as well as the oxidative fragmentation of the pentose substrate in the photorespiration process. Both reactions occur simultaneously and in competition at the same active site. The polypeptide is Ribulose bisphosphate carboxylase large chain (Stegnosperma halimifolium).